We begin with the raw amino-acid sequence, 425 residues long: Serine--tRNA ligase 2 (425 aa).

Threonine 230–glutamate 232 is an L-serine binding site. Position 261–263 (arginine 261–glutamate 263) interacts with ATP. An L-serine-binding site is contributed by glutamate 284. Position 348–351 (glutamate 348–serine 351) interacts with ATP. Serine 383 contributes to the L-serine binding site.

Belongs to the class-II aminoacyl-tRNA synthetase family. Type-1 seryl-tRNA synthetase subfamily. As to quaternary structure, homodimer. The tRNA molecule binds across the dimer.

Its subcellular location is the cytoplasm. The enzyme catalyses tRNA(Ser) + L-serine + ATP = L-seryl-tRNA(Ser) + AMP + diphosphate + H(+). The catalysed reaction is tRNA(Sec) + L-serine + ATP = L-seryl-tRNA(Sec) + AMP + diphosphate + H(+). It participates in aminoacyl-tRNA biosynthesis; selenocysteinyl-tRNA(Sec) biosynthesis; L-seryl-tRNA(Sec) from L-serine and tRNA(Sec): step 1/1. Functionally, catalyzes the attachment of serine to tRNA(Ser). Is also able to aminoacylate tRNA(Sec) with serine, to form the misacylated tRNA L-seryl-tRNA(Sec), which will be further converted into selenocysteinyl-tRNA(Sec). The protein is Serine--tRNA ligase 2 of Lactiplantibacillus plantarum (strain ATCC BAA-793 / NCIMB 8826 / WCFS1) (Lactobacillus plantarum).